A 1040-amino-acid polypeptide reads, in one-letter code: MQVLPPSSTGGPSRLFIMRPVATTLLMVAILLAGIIGYRALPVSALPEVDYPTIQVVTLYPGASPDVMTSAVTAPLERQFGQMSGLKQMSSQSSGGASVITLQFQLTLPLDVAEQEVQAAINAATNLLPSDLPNPPVYSKVNPADPPIMTLAVTSTAMPMTQVEDMVETRVAQKISQISGVGLVTLSGGQRPAVRVKLNAQAIAALGLTSETVRTAITGANVNSAKGSLDGPSRAVTLSANDQMQSAEEYRQLIIAYQNGAPIRLGDVATVEQGAENSWLGAWANKEQAIVMNVQRQPGANIISTADSIRQMLPQLTESLPKSVKVTVLSDRTTNIRASVNDTQFELMMAIALVVMIIYLFLRNIPATIIPGFAVPLSLIGTFAVMVFLDFSINNLTLMALTIATGFVVDDAIVVIENISRYIEKGEKPLAAALKGAGEIGFTIISLTFSLIAVLIPLLFMGDIVGRLFREFAITLAVAILISAVVSLTLTPMMCARMLSQESLRKQNRFSRASEKMFDRIIAAYGRGLAKVLNHPWLTLSVALSTLLLSVLLWVFIPKGFFPVQDNGIIQGTLQAPQSSSFANMAQRQRQVADVILQDPAVQSLTSFVGVDGTNPSLNSARLQINLKPLDERDDRVQKVIARLQTAVDKVPGVDLFLQPTQDLTIDTQVSRTQYQFTLQATSLDALSTWVPELMEKLQQLPQLSDVSSDWQDKGLVAYVNVDRDSASRLGISMADVDNALYNAFGQRLISTIYTQANQYRVVLEHNTENTPGLAALDTIRLTSSDGGVVPLSSIAKIEQRFAPLSINHLDQFPVTTISFNVPDNYSLGDAVQAIMDTEKTLNLPVDITTQFQGSTLAFQSALGSTVWLIVAAVVAMYIVLGILYESFIHPITILSTLPTAGVGALLALMIAGSELDVIAIIGIILLIGIVKKNAIMMIDFALAAEREQGMSPRDAIYQACLLRFRPILMTTLAALLGALPLMLSTGVGAELRRPLGIGMVGGLIVSQVLTLFTTPVIYLLFDRLALWTKSRFARHEEEA.

12 consecutive transmembrane segments (helical) span residues 16–36 (FIMR…AGII), 347–367 (LMMA…NIPA), 369–389 (IIPG…MVFL), 396–416 (LTLM…IVVI), 440–460 (IGFT…PLLF), 472–492 (FAIT…TLTP), 537–557 (WLTL…WVFI), 863–883 (LGST…VLGI), 888–908 (FIHP…ALLA), 911–931 (IAGS…IGIV), 968–988 (ILMT…STGV), and 998–1018 (IGMV…TPVI).

This sequence belongs to the resistance-nodulation-cell division (RND) (TC 2.A.6) family. MdtB subfamily. Part of a tripartite efflux system composed of MdtA, MdtB and MdtC. MdtB forms a heteromultimer with MdtC.

The protein resides in the cell inner membrane. The MdtABC tripartite complex confers resistance against novobiocin and deoxycholate. The sequence is that of Multidrug resistance protein MdtB from Escherichia coli O8 (strain IAI1).